Consider the following 678-residue polypeptide: DNA ligase (678 aa).

NAD(+) is bound by residues 47-51 (DSDYD), 96-97 (SL), and E122. K124 acts as the N6-AMP-lysine intermediate in catalysis. Positions 145, 182, 300, and 324 each coordinate NAD(+). Zn(2+) contacts are provided by C418, C421, C436, and C442. Residues 602–678 (AYNESFTGKT…ILEDNLKDLL (77 aa)) enclose the BRCT domain.

This sequence belongs to the NAD-dependent DNA ligase family. LigA subfamily. Mg(2+) is required as a cofactor. It depends on Mn(2+) as a cofactor.

It catalyses the reaction NAD(+) + (deoxyribonucleotide)n-3'-hydroxyl + 5'-phospho-(deoxyribonucleotide)m = (deoxyribonucleotide)n+m + AMP + beta-nicotinamide D-nucleotide.. Its function is as follows. DNA ligase that catalyzes the formation of phosphodiester linkages between 5'-phosphoryl and 3'-hydroxyl groups in double-stranded DNA using NAD as a coenzyme and as the energy source for the reaction. It is essential for DNA replication and repair of damaged DNA. This Francisella tularensis subsp. holarctica (strain LVS) protein is DNA ligase.